The primary structure comprises 411 residues: MEVNYCPETPLLSSNDHEAIDHKPKLTGMVSSMKSNFFADLPQKLRSKIDPENPLHLDVSKAAGLKEDEKEYYERQLATLKSFEEVESFLARSDEYTIDEKEEEEDRAERAAQELAMQISNWANIFLLALKIYATVKSGSIAIAASTLDSLLDLMAGGILWFTHLSMKNVNIYKYPIGKLRVQPVGIIIFAAVMATLGFQVLLVAAEQLISNEPSEKMNHVQLIWLYSIMLSATAIKLVLWIYCKSSRNHIVRAYAKDHHFDVVTNVLGLVAAVLANAFYWWLDPTGAILLAIYTIVNWSGTVMENAVSLIGQSAPPEVLQKLTYLVMRQGGDNIKHVDTVRAYTFGVLYFVEVDIELPEDLPLKEAHAIGESLQIKLEELPEVERAFVHLDFECHHKPEHSVLSTIPNDL.

The Cytoplasmic segment spans residues 1-115; the sequence is MEVNYCPETP…DRAERAAQEL (115 aa). Residues 116-136 traverse the membrane as a helical segment; it reads AMQISNWANIFLLALKIYATV. Residues 137–140 are Vacuolar-facing; it reads KSGS. The chain crosses the membrane as a helical span at residues 141–161; the sequence is IAIAASTLDSLLDLMAGGILW. Residues 162-184 are Cytoplasmic-facing; the sequence is FTHLSMKNVNIYKYPIGKLRVQP. The helical transmembrane segment at 185 to 205 threads the bilayer; that stretch reads VGIIIFAAVMATLGFQVLLVA. Residues 206–222 are Vacuolar-facing; the sequence is AEQLISNEPSEKMNHVQ. A helical transmembrane segment spans residues 223 to 243; that stretch reads LIWLYSIMLSATAIKLVLWIY. Topologically, residues 244–262 are cytoplasmic; sequence CKSSRNHIVRAYAKDHHFD. A helical transmembrane segment spans residues 263 to 283; that stretch reads VVTNVLGLVAAVLANAFYWWL. Residues 284–287 are Vacuolar-facing; sequence DPTG. Residues 288–308 form a helical membrane-spanning segment; that stretch reads AILLAIYTIVNWSGTVMENAV. Residues 309–390 are Cytoplasmic-facing; the sequence is SLIGQSAPPE…LPEVERAFVH (82 aa).

The protein belongs to the cation diffusion facilitator (CDF) transporter (TC 2.A.4) family.

The protein localises to the vacuole membrane. Involved in sequestration of excess metal in the cytoplasm into vacuoles to maintain metal homeostasis. This chain is Putative metal tolerance protein C3 (MTPC3), found in Arabidopsis thaliana (Mouse-ear cress).